The primary structure comprises 679 residues: Glycine--tRNA ligase beta subunit (679 aa).

The protein belongs to the class-II aminoacyl-tRNA synthetase family. In terms of assembly, tetramer of two alpha and two beta subunits.

Its subcellular location is the cytoplasm. The enzyme catalyses tRNA(Gly) + glycine + ATP = glycyl-tRNA(Gly) + AMP + diphosphate. This is Glycine--tRNA ligase beta subunit from Streptococcus pyogenes serotype M4 (strain MGAS10750).